A 520-amino-acid chain; its full sequence is Probable glycerol-3-phosphate acyltransferase 3 (520 aa).

The next 5 helical transmembrane spans lie at 5–20 (ISIF…RFIL), 64–84 (YFML…LFIL), 88–108 (ISLM…FFGI), 264–284 (TLMN…AAAA), and 286–306 (LFVS…FSGC). An HXXXXD motif motif is present at residues 334 to 339 (HRTLLD).

It belongs to the GPAT/DAPAT family. Widely expressed at low level. Expressed at higher level in seedlings and leaves.

It localises to the membrane. It carries out the reaction sn-glycerol 3-phosphate + an acyl-CoA = a 1-acyl-sn-glycero-3-phosphate + CoA. It participates in phospholipid metabolism; CDP-diacylglycerol biosynthesis; CDP-diacylglycerol from sn-glycerol 3-phosphate: step 1/3. Its function is as follows. Esterifies acyl-group from acyl-ACP to the sn-1 position of glycerol-3-phosphate, an essential step in glycerolipid biosynthesis. This Arabidopsis thaliana (Mouse-ear cress) protein is Probable glycerol-3-phosphate acyltransferase 3 (GPAT3).